Reading from the N-terminus, the 351-residue chain is MKVIKTRNVQQALPEALYQLSFEGVRRDSRNGPVFMFPEPVTTVYLRPAERVLFWAERDANPFFHLMESLWMLGGRNDVEYVARFVDRMRSYSDDGLTFHGAYGFRWRQHFFEDQLPKIIAALKENRDDRRQVLSMWDADADLGRQGKDLPCNLQAIFQIACDGRLDMTVTNRSNDLIWGAYGANAVHFSYLHEYVARSVGVEQGIYRQVSANFHAYEEVLNKVAPLADLAANPMTGTETPDPYAAGIAEPYPLMSTDPEEWNQELMMFLSEPDAVGFRDPFFRRVAIPMMKAHKAFKQTSNPSRFDAALAELDNVAATDWKLAGVEWIERRRAAFEARKARAMDDGVAYE.

This sequence belongs to the thymidylate synthase family.

The enzyme catalyses dUMP + (6R)-5,10-methylene-5,6,7,8-tetrahydrofolate + H2O = 5-hydroxymethyl-dUMP + (6S)-5,6,7,8-tetrahydrofolate. In terms of biological role, catalyzes formation of 5-hydroxymethyldeoxyuridylate (5HMdUMP) as a step in the pathway that replaces dTMP by thymidine hypermodifications in the viral genome. As a final result of the pathway of hypermodification, 5-aminoethyl-2'-deoxyuridine (5-NedU) substitutes for about 30% of thymidines in the viral DNA. These modifications probably prevent degradation of viral genome by the host restriction-modification antiviral defense system. The sequence is that of Deoxyuridylate hydroxymethyltransferase from Pseudomonas aeruginosa.